Consider the following 218-residue polypeptide: Probable transaldolase (218 aa).

Lys-83 acts as the Schiff-base intermediate with substrate in catalysis.

The protein belongs to the transaldolase family. Type 3B subfamily.

It is found in the cytoplasm. It catalyses the reaction D-sedoheptulose 7-phosphate + D-glyceraldehyde 3-phosphate = D-erythrose 4-phosphate + beta-D-fructose 6-phosphate. Its pathway is carbohydrate degradation; pentose phosphate pathway; D-glyceraldehyde 3-phosphate and beta-D-fructose 6-phosphate from D-ribose 5-phosphate and D-xylulose 5-phosphate (non-oxidative stage): step 2/3. In terms of biological role, transaldolase is important for the balance of metabolites in the pentose-phosphate pathway. The polypeptide is Probable transaldolase (Thermotoga petrophila (strain ATCC BAA-488 / DSM 13995 / JCM 10881 / RKU-1)).